The sequence spans 430 residues: Serine hydroxymethyltransferase (430 aa).

Residues L126 and 130-132 each bind (6S)-5,6,7,8-tetrahydrofolate; that span reads GHL. Residue K235 is modified to N6-(pyridoxal phosphate)lysine.

This sequence belongs to the SHMT family. As to quaternary structure, homodimer. Requires pyridoxal 5'-phosphate as cofactor.

The protein localises to the cytoplasm. It carries out the reaction (6R)-5,10-methylene-5,6,7,8-tetrahydrofolate + glycine + H2O = (6S)-5,6,7,8-tetrahydrofolate + L-serine. The protein operates within one-carbon metabolism; tetrahydrofolate interconversion. Its pathway is amino-acid biosynthesis; glycine biosynthesis; glycine from L-serine: step 1/1. Its function is as follows. Catalyzes the reversible interconversion of serine and glycine with tetrahydrofolate (THF) serving as the one-carbon carrier. This reaction serves as the major source of one-carbon groups required for the biosynthesis of purines, thymidylate, methionine, and other important biomolecules. Also exhibits THF-independent aldolase activity toward beta-hydroxyamino acids, producing glycine and aldehydes, via a retro-aldol mechanism. In Leifsonia xyli subsp. xyli (strain CTCB07), this protein is Serine hydroxymethyltransferase.